Here is a 419-residue protein sequence, read N- to C-terminus: MAQEVIKIRGGRTLNGEVNISGAKNSAVAIIPATLLAQGHVKLEGLPQISDVKTLVSLLEDLNIKASLNGTELEVDTTEIQNAALPNNKVESLRASYYMMGAMLGRFKKCVIGLPGGCPLGPRPIDQHIKGFKALGAEIDESSTTSMKIEAKELKGAHIFLDMVSVGATINIMLAAVYATGQTVIENAAKEPEVVDVANFLTSMGANIKGAGTSTIKINGVKELHGSEYQVIPDRIEAGTYMCIAAACGENVILNNIVPKHVETLTAKFSELGVNVDVRDERIRINNNAPYQFVDIKTLVYPGFATDLQQPITPLLFMANGPSFVTDTIYPERFKHVEELKRMGANIEVDEGTATIKPSTLHGAEVYASDLRAGACLIIAGLIAEGVTTIYNVKHIYRGYTDIVEHLKALGADIWTETV.

24–25 (KN) contacts phosphoenolpyruvate. Position 94 (R94) interacts with UDP-N-acetyl-alpha-D-glucosamine. Residue C118 is the Proton donor of the active site. C118 is modified (2-(S-cysteinyl)pyruvic acid O-phosphothioketal). UDP-N-acetyl-alpha-D-glucosamine is bound by residues 123–127 (RPIDQ), D307, and I329.

This sequence belongs to the EPSP synthase family. MurA subfamily.

It localises to the cytoplasm. The catalysed reaction is phosphoenolpyruvate + UDP-N-acetyl-alpha-D-glucosamine = UDP-N-acetyl-3-O-(1-carboxyvinyl)-alpha-D-glucosamine + phosphate. It functions in the pathway cell wall biogenesis; peptidoglycan biosynthesis. Functionally, cell wall formation. Adds enolpyruvyl to UDP-N-acetylglucosamine. The polypeptide is UDP-N-acetylglucosamine 1-carboxyvinyltransferase 2 (Staphylococcus aureus (strain bovine RF122 / ET3-1)).